We begin with the raw amino-acid sequence, 57 residues long: MVIPIRPLSPSLRKRTSGRFRQWSSRVTSGMVCLVRYSALCSLNTMQQLWKRFVLVV.

The sequence is that of Gene 19.3 protein (19.3) from Escherichia coli (Bacteriophage T3).